The primary structure comprises 160 residues: MKSIAVYPGSFDPFTNGHLDIIRRAHPLFEEIIIAVAINSKKTSLFSPEERVEMIGKVFHGWDKIKIDTFEGLTVDYCKEKNSRVILRGLRAVTDFDYEYAISLMNKKLAPEIETYFLMADNEYSFVSSTIVKEVARHGRAVSNQVPDVVGEALVKKFSV.

Ser-10 serves as a coordination point for substrate. ATP contacts are provided by residues 10 to 11 (SF) and His-18. 3 residues coordinate substrate: Lys-42, Thr-74, and Arg-88. ATP is bound by residues 89-91 (GLR), Glu-99, and 124-130 (YSFVSST).

The protein belongs to the bacterial CoaD family. Homohexamer. Requires Mg(2+) as cofactor.

Its subcellular location is the cytoplasm. It catalyses the reaction (R)-4'-phosphopantetheine + ATP + H(+) = 3'-dephospho-CoA + diphosphate. It participates in cofactor biosynthesis; coenzyme A biosynthesis; CoA from (R)-pantothenate: step 4/5. In terms of biological role, reversibly transfers an adenylyl group from ATP to 4'-phosphopantetheine, yielding dephospho-CoA (dPCoA) and pyrophosphate. The sequence is that of Phosphopantetheine adenylyltransferase from Leptospira biflexa serovar Patoc (strain Patoc 1 / Ames).